The sequence spans 392 residues: Monooxygenase AgnR1 (392 aa).

The N-terminal stretch at 1–20 (MSAPQKCAAVVVGAGPAGLA) is a signal peptide. A glycan (N-linked (GlcNAc...) asparagine) is linked at Asn134.

Its function is as follows. Monooxygenase; part of the gene cluster that mediates the biosynthesis of agnestins, dihydroxy-xanthone metabolites. The pathway begins with the assembly and cyclization of atrochrysone thioester by the non-reducing polyketide synthase Agnpks1. The atrochrysone carboxyl ACP thioesterase AgnL7 then breaks the thioester bond and releases the atrochrysone carboxylic acid as the first enzyme-free intermediate. The decarboxylase AgnL1 then catalyzes the concerted decarboxylation-elimination required to convert atochrysone carboxylic acid into emodin anthrone, which is further oxidized to emodin by the anthrone oxygenase AgnL2. Emodin then undergoes reduction catalyzed by the oxidoreductase AgnL4 to yield the dihydroquinone tautomer which is the substrate for reduction by the short chain dehydrogenase AgnL6 reduction to produce hydroxyketone, followed by AgnL8 dehydration and likely spontaneous autoxidation to chrysophanol. Baeyer-Villiger oxidation by the oxidase AgnL3 leads to monodictyphenone via cleavage of the C-10/C-10a bond of chrysophanol. Alternative cleavage at the C-4a/C-10 bond of chrysophanol also leads to the formation some cephalone F. Further conversion to agnestins A and B, requires reduction to dihydro-monodictyphenone, oxidation to agnestin C probably via an epoxide, and rearrangement to either agnestin A or agnestin B directly, although agnestin A or agnestin B can also interconvert. Within the cluster, AgnR1 is the only unassigned oxidoreductase present which could be involved in this conversion. However, AgnR1 seems not to be involved in this step, and thus genes involved in the proposed oxidation/reduction may be located elsewhere on the genome. Further agnestin A derivatives are probably formed by spontaneous decarboxylations, dehydrations and methanolysis reactions. The sequence is that of Monooxygenase AgnR1 from Paecilomyces divaricatus (Penicillium divaricatum).